Reading from the N-terminus, the 341-residue chain is S-adenosylmethionine:tRNA ribosyltransferase-isomerase (341 aa).

Belongs to the QueA family. As to quaternary structure, monomer.

It localises to the cytoplasm. The enzyme catalyses 7-aminomethyl-7-carbaguanosine(34) in tRNA + S-adenosyl-L-methionine = epoxyqueuosine(34) in tRNA + adenine + L-methionine + 2 H(+). The protein operates within tRNA modification; tRNA-queuosine biosynthesis. In terms of biological role, transfers and isomerizes the ribose moiety from AdoMet to the 7-aminomethyl group of 7-deazaguanine (preQ1-tRNA) to give epoxyqueuosine (oQ-tRNA). This is S-adenosylmethionine:tRNA ribosyltransferase-isomerase from Thermoanaerobacter sp. (strain X514).